We begin with the raw amino-acid sequence, 311 residues long: tRNA pseudouridine synthase B (311 aa).

The active-site Nucleophile is Asp-49.

This sequence belongs to the pseudouridine synthase TruB family. Type 1 subfamily.

It catalyses the reaction uridine(55) in tRNA = pseudouridine(55) in tRNA. In terms of biological role, responsible for synthesis of pseudouridine from uracil-55 in the psi GC loop of transfer RNAs. The polypeptide is tRNA pseudouridine synthase B (Actinobacillus succinogenes (strain ATCC 55618 / DSM 22257 / CCUG 43843 / 130Z)).